Reading from the N-terminus, the 354-residue chain is UDP-3-O-acylglucosamine N-acyltransferase (354 aa).

The active-site Proton acceptor is the His247.

The protein belongs to the transferase hexapeptide repeat family. LpxD subfamily. As to quaternary structure, homotrimer.

It carries out the reaction a UDP-3-O-[(3R)-3-hydroxyacyl]-alpha-D-glucosamine + a (3R)-hydroxyacyl-[ACP] = a UDP-2-N,3-O-bis[(3R)-3-hydroxyacyl]-alpha-D-glucosamine + holo-[ACP] + H(+). It functions in the pathway bacterial outer membrane biogenesis; LPS lipid A biosynthesis. Functionally, catalyzes the N-acylation of UDP-3-O-acylglucosamine using 3-hydroxyacyl-ACP as the acyl donor. Is involved in the biosynthesis of lipid A, a phosphorylated glycolipid that anchors the lipopolysaccharide to the outer membrane of the cell. The polypeptide is UDP-3-O-acylglucosamine N-acyltransferase (Chlamydia trachomatis serovar L2 (strain ATCC VR-902B / DSM 19102 / 434/Bu)).